Here is a 430-residue protein sequence, read N- to C-terminus: Ethylene-responsive transcription factor WRI1 (430 aa).

Over residues 1-26 (MKKRLTTSTCSSSPSSSVSSSTTTSS) the composition is skewed to low complexity. Residues 1-66 (MKKRLTTSTC…PASTRRSSIY (66 aa)) form a disordered region. Positions 53–63 (NPTSPASTRRS) are enriched in polar residues. Positions 65 to 131 (IYRGVTRHRW…WGPDTILNFP (67 aa)) form a DNA-binding region, AP2/ERF 1. T70 is subject to Phosphothreonine; by KIN10. At S166 the chain carries Phosphoserine; by KIN10. Positions 167 to 225 (KYRGVARHHHNGRWEARIGRVFGNKYLYLGTYNTQEEAAAAYDMAAIEYRGANAVTNFD) form a DNA-binding region, AP2/ERF 2. Residues 260–274 (VETREAKEEPREEVK) are compositionally biased toward basic and acidic residues. 2 disordered regions span residues 260–297 (VETR…EQQE) and 398–422 (SPPS…TTTT).

The protein belongs to the AP2/ERF transcription factor family. AP2 subfamily. As to quaternary structure, interacts with KIN10 and KIN11. Post-translationally, ubiquitinated. In terms of processing, the phosphorylation at Thr-70 and Ser-166 by KIN10 facilitates its degradation via the proteasomal pathway. In terms of tissue distribution, mostly expressed in siliques, especially in seeds. Also detected in roots and flowers, and, to a lower extent, in leaves stems and seedlings.

The protein resides in the nucleus. Its activity is regulated as follows. Down-regulated by KIN10 that controls its protein stability under a phosphorylation-dependent manner. May be involved in the regulation of gene expression by stress factors and by components of stress signal transduction pathways. Transcriptional activator involved in the activation of a subset of sugar-responsive genes and the control of carbon flow from sucrose import to oil accumulation in developing seeds. Binds to the GCC-box pathogenesis-related promoter element. Promotes sugar uptake and seed oil accumulation by glycolysis. Required for embryo development, seed germination and, indirectly, for seedling establishment. Negative regulator of the ABA-mediated germination inhibition. The protein is Ethylene-responsive transcription factor WRI1 (WRI1) of Arabidopsis thaliana (Mouse-ear cress).